The chain runs to 436 residues: ATP-dependent RNA helicase RhlB (436 aa).

Positions 9–37 (QKFADFPLHKEVHQALNEAGFEFCTPIQA) match the Q motif motif. In terms of domain architecture, Helicase ATP-binding spans 40 to 219 (LPILLEKKDI…YDHMNEPEKV (180 aa)). 53–60 (AQTGTGKT) provides a ligand contact to ATP. Positions 165-168 (DEAD) match the DEAD box motif. One can recognise a Helicase C-terminal domain in the interval 243–390 (KMPLLLSLLE…VTSYDSDALL (148 aa)). The tract at residues 392–436 (DIPPPVRIHRKPSTHTRNTRDRGASRPQGGQRSGPRRHDRTRRHS) is disordered. The span at 425-436 (GPRRHDRTRRHS) shows a compositional bias: basic residues.

This sequence belongs to the DEAD box helicase family. RhlB subfamily. As to quaternary structure, component of the RNA degradosome, which is a multiprotein complex involved in RNA processing and mRNA degradation.

Its subcellular location is the cytoplasm. It carries out the reaction ATP + H2O = ADP + phosphate + H(+). In terms of biological role, DEAD-box RNA helicase involved in RNA degradation. Has RNA-dependent ATPase activity and unwinds double-stranded RNA. This Shewanella halifaxensis (strain HAW-EB4) protein is ATP-dependent RNA helicase RhlB.